Reading from the N-terminus, the 369-residue chain is tRNA/tmRNA (uracil-C(5))-methyltransferase (369 aa).

Positions 190, 218, 223, 239, and 301 each coordinate S-adenosyl-L-methionine. The Nucleophile role is filled by cysteine 326. Glutamate 360 serves as the catalytic Proton acceptor.

Belongs to the class I-like SAM-binding methyltransferase superfamily. RNA M5U methyltransferase family. TrmA subfamily.

The enzyme catalyses uridine(54) in tRNA + S-adenosyl-L-methionine = 5-methyluridine(54) in tRNA + S-adenosyl-L-homocysteine + H(+). The catalysed reaction is uridine(341) in tmRNA + S-adenosyl-L-methionine = 5-methyluridine(341) in tmRNA + S-adenosyl-L-homocysteine + H(+). Dual-specificity methyltransferase that catalyzes the formation of 5-methyluridine at position 54 (m5U54) in all tRNAs, and that of position 341 (m5U341) in tmRNA (transfer-mRNA). In Vibrio atlanticus (strain LGP32) (Vibrio splendidus (strain Mel32)), this protein is tRNA/tmRNA (uracil-C(5))-methyltransferase.